The sequence spans 226 residues: Lipoprotein-releasing system ATP-binding protein LolD (226 aa).

The 222-residue stretch at 5 to 226 folds into the ABC transporter domain; it reads LRCEKISKFY…MADGVLREAS (222 aa). 41 to 48 is a binding site for ATP; the sequence is GSSGSGKS.

The protein belongs to the ABC transporter superfamily. Lipoprotein translocase (TC 3.A.1.125) family. The complex is composed of two ATP-binding proteins (LolD) and two transmembrane proteins (LolC and LolE).

The protein localises to the cell inner membrane. Functionally, part of the ABC transporter complex LolCDE involved in the translocation of mature outer membrane-directed lipoproteins, from the inner membrane to the periplasmic chaperone, LolA. Responsible for the formation of the LolA-lipoprotein complex in an ATP-dependent manner. The sequence is that of Lipoprotein-releasing system ATP-binding protein LolD from Haemophilus ducreyi (strain 35000HP / ATCC 700724).